Here is a 208-residue protein sequence, read N- to C-terminus: Cytidylate kinase (208 aa).

7–15 lines the ATP pocket; sequence GPAASGKGT.

This sequence belongs to the cytidylate kinase family. Type 1 subfamily.

It is found in the cytoplasm. It carries out the reaction CMP + ATP = CDP + ADP. The catalysed reaction is dCMP + ATP = dCDP + ADP. This chain is Cytidylate kinase, found in Xanthobacter autotrophicus (strain ATCC BAA-1158 / Py2).